An 82-amino-acid polypeptide reads, in one-letter code: Small ribosomal subunit protein uS17 (82 aa).

The protein belongs to the universal ribosomal protein uS17 family. As to quaternary structure, part of the 30S ribosomal subunit.

In terms of biological role, one of the primary rRNA binding proteins, it binds specifically to the 5'-end of 16S ribosomal RNA. This Bradyrhizobium diazoefficiens (strain JCM 10833 / BCRC 13528 / IAM 13628 / NBRC 14792 / USDA 110) protein is Small ribosomal subunit protein uS17.